The sequence spans 128 residues: 2-iminobutanoate/2-iminopropanoate deaminase (128 aa).

It belongs to the RutC family.

Its subcellular location is the cytoplasm. It carries out the reaction 2-iminobutanoate + H2O = 2-oxobutanoate + NH4(+). The catalysed reaction is 2-iminopropanoate + H2O = pyruvate + NH4(+). In terms of biological role, catalyzes the hydrolytic deamination of enamine/imine intermediates that form during the course of normal metabolism. May facilitate the release of ammonia from these potentially toxic reactive metabolites, reducing their impact on cellular components. It may act on enamine/imine intermediates formed by several types of pyridoxal-5'-phosphate-dependent dehydratases including L-threonine dehydratase. Preferentially digests Leu and Met in cooperation with L-amino acid oxidase, but digests Phe poorly. The sequence is that of 2-iminobutanoate/2-iminopropanoate deaminase from Dermatophagoides farinae (American house dust mite).